Consider the following 268-residue polypeptide: 3-methyl-2-oxobutanoate hydroxymethyltransferase (268 aa).

Residues D44 and D83 each contribute to the Mg(2+) site. 3-methyl-2-oxobutanoate-binding positions include 44–45 (DS), D83, and K113. E115 provides a ligand contact to Mg(2+). The Proton acceptor role is filled by E182.

This sequence belongs to the PanB family. As to quaternary structure, homodecamer; pentamer of dimers. The cofactor is Mg(2+).

It localises to the cytoplasm. It carries out the reaction 3-methyl-2-oxobutanoate + (6R)-5,10-methylene-5,6,7,8-tetrahydrofolate + H2O = 2-dehydropantoate + (6S)-5,6,7,8-tetrahydrofolate. It participates in cofactor biosynthesis; (R)-pantothenate biosynthesis; (R)-pantoate from 3-methyl-2-oxobutanoate: step 1/2. Functionally, catalyzes the reversible reaction in which hydroxymethyl group from 5,10-methylenetetrahydrofolate is transferred onto alpha-ketoisovalerate to form ketopantoate. The polypeptide is 3-methyl-2-oxobutanoate hydroxymethyltransferase (Synechococcus elongatus (strain ATCC 33912 / PCC 7942 / FACHB-805) (Anacystis nidulans R2)).